A 298-amino-acid polypeptide reads, in one-letter code: Protoheme IX farnesyltransferase (298 aa).

Transmembrane regions (helical) follow at residues 16 to 36 (VVAL…PDMP), 45 to 65 (ALGF…NQLL), 93 to 113 (VFAG…VNVI), 114 to 134 (TAVL…VYLK), 141 to 161 (IVIG…AVTG), 172 to 192 (SLLV…LAIF), 223 to 243 (VLLA…VFYL), 244 to 264 (GGAV…LNPP), and 277 to 297 (IVYL…LPWV).

The protein belongs to the UbiA prenyltransferase family. Protoheme IX farnesyltransferase subfamily.

It localises to the cell inner membrane. It catalyses the reaction heme b + (2E,6E)-farnesyl diphosphate + H2O = Fe(II)-heme o + diphosphate. It participates in porphyrin-containing compound metabolism; heme O biosynthesis; heme O from protoheme: step 1/1. Its function is as follows. Converts heme B (protoheme IX) to heme O by substitution of the vinyl group on carbon 2 of heme B porphyrin ring with a hydroxyethyl farnesyl side group. The chain is Protoheme IX farnesyltransferase from Xanthomonas oryzae pv. oryzae (strain MAFF 311018).